A 592-amino-acid polypeptide reads, in one-letter code: Aspartate--tRNA(Asp/Asn) ligase (592 aa).

Glu-175 serves as a coordination point for L-aspartate. The interval 199-202 (QLFK) is aspartate. Arg-221 lines the L-aspartate pocket. ATP contacts are provided by residues 221–223 (RDE) and Gln-230. His-450 contacts L-aspartate. Position 483 (Glu-483) interacts with ATP. Position 490 (Arg-490) interacts with L-aspartate. Position 535–538 (535–538 (GLDR)) interacts with ATP.

It belongs to the class-II aminoacyl-tRNA synthetase family. Type 1 subfamily. As to quaternary structure, homodimer.

The protein resides in the cytoplasm. The enzyme catalyses tRNA(Asx) + L-aspartate + ATP = L-aspartyl-tRNA(Asx) + AMP + diphosphate. In terms of biological role, aspartyl-tRNA synthetase with relaxed tRNA specificity since it is able to aspartylate not only its cognate tRNA(Asp) but also tRNA(Asn). Reaction proceeds in two steps: L-aspartate is first activated by ATP to form Asp-AMP and then transferred to the acceptor end of tRNA(Asp/Asn). This chain is Aspartate--tRNA(Asp/Asn) ligase, found in Acinetobacter baumannii (strain AB307-0294).